The chain runs to 166 residues: MALNIEDKKAVVEEVSAIIAEAGSMVAAEYRGLTVEQLTELRSKAREANVSVRVVKNTLVRRAVAGTKFEDMAETFSGPLIFAFSGEELGNAARVFKDFSKANEALVVKSLSIGEGVMDASQLAAIAALPTYDEALSKLLYVMKEPVAKVARGLVAIKEQKEAEAA.

This sequence belongs to the universal ribosomal protein uL10 family. As to quaternary structure, part of the ribosomal stalk of the 50S ribosomal subunit. The N-terminus interacts with L11 and the large rRNA to form the base of the stalk. The C-terminus forms an elongated spine to which L12 dimers bind in a sequential fashion forming a multimeric L10(L12)X complex.

In terms of biological role, forms part of the ribosomal stalk, playing a central role in the interaction of the ribosome with GTP-bound translation factors. In Hydrogenovibrio crunogenus (strain DSM 25203 / XCL-2) (Thiomicrospira crunogena), this protein is Large ribosomal subunit protein uL10.